Consider the following 416-residue polypeptide: Histidinol dehydrogenase (416 aa).

The NAD(+) site is built by Tyr-117, Gln-178, and Asn-201. Thr-224, Gln-246, and His-249 together coordinate substrate. Zn(2+)-binding residues include Gln-246 and His-249. Catalysis depends on proton acceptor residues Glu-314 and His-315. Positions 315, 348, 402, and 407 each coordinate substrate. Residue Asp-348 participates in Zn(2+) binding. His-407 contacts Zn(2+).

This sequence belongs to the histidinol dehydrogenase family. Requires Zn(2+) as cofactor.

The enzyme catalyses L-histidinol + 2 NAD(+) + H2O = L-histidine + 2 NADH + 3 H(+). Its pathway is amino-acid biosynthesis; L-histidine biosynthesis; L-histidine from 5-phospho-alpha-D-ribose 1-diphosphate: step 9/9. Functionally, catalyzes the sequential NAD-dependent oxidations of L-histidinol to L-histidinaldehyde and then to L-histidine. The sequence is that of Histidinol dehydrogenase from Staphylococcus aureus (strain Mu50 / ATCC 700699).